The primary structure comprises 1669 residues: Collagen alpha-1(IV) chain (1669 aa).

Residues Met1–Ala27 form the signal peptide. The propeptide at Lys28–Lys172 is N-terminal propeptide (7S domain). Disordered regions lie at residues Lys48–Glu459, Gly504–Gln1382, and Pro1404–Pro1431. N-linked (GlcNAc...) asparagine glycosylation occurs at Asn126. A triple-helical region region spans residues Gly173–Pro1440. Positions Val196–Pro214 are enriched in pro residues. A 3-hydroxyproline mark is found at Pro204, Pro207, and Pro210. Positions Gln234–Gln249 are enriched in low complexity. Basic and acidic residues-rich tracts occupy residues Glu250 to Lys263 and Pro289 to Lys298. Composition is skewed to pro residues over residues Pro367–Pro376, Pro413–Gln424, and Pro436–Pro448. Positions Phe535–Asp545 are enriched in basic and acidic residues. Over residues Gly586–Gly595 the composition is skewed to gly residues. 2 positions are modified to 3-hydroxyproline: Pro587 and Pro602. A 4-hydroxyproline modification is found at Pro603. Pro605 carries the post-translational modification 3-hydroxyproline. The residue at position 606 (Pro606) is a 4-hydroxyproline. Residues Ala611–Ala620 show a composition bias toward low complexity. Gly residues predominate over residues Gly621 to Gly630. A 4-hydroxyproline mark is found at Pro623, Pro626, Pro629, and Pro632. The residue at position 647 (Pro647) is a 3-hydroxyproline. A compositionally biased stretch (gly residues) spans Gly797–Gly817. 2 stretches are compositionally biased toward low complexity: residues Gln856–Pro875 and Pro977–Pro986. The segment covering Gly1011–Gly1020 has biased composition (gly residues). Residues Ser1086 to Pro1114 show a composition bias toward low complexity. Pro1214 is subject to 3-hydroxyproline. Residues Pro1247 to Leu1258 show a composition bias toward pro residues. Over residues Gly1290–Gly1299 the composition is skewed to gly residues. The span at Pro1368–Gln1382 shows a compositional bias: low complexity. A 3-hydroxyproline modification is found at Pro1424. The 225-residue stretch at Gly1445–Thr1669 folds into the Collagen IV NC1 domain. Disulfide bonds link Cys1460/Cys1551, Cys1493/Cys1548, Cys1505/Cys1511, Cys1570/Cys1665, Cys1604/Cys1662, and Cys1616/Cys1622. An S-Lysyl-methionine sulfilimine (Met-Lys) (interchain with K-1651) cross-link involves residue Met1533. Lys1651 participates in a covalent cross-link: S-Lysyl-methionine sulfilimine (Lys-Met) (interchain with M-1533).

The protein belongs to the type IV collagen family. As to quaternary structure, there are six type IV collagen isoforms, alpha 1(IV)-alpha 6(IV), each of which can form a triple helix structure with 2 other chains to generate type IV collagen network. Interacts with EFEMP2. In terms of processing, lysines at the third position of the tripeptide repeating unit (G-X-Y) are hydroxylated. The modified lysines can be O-glycosylated. Post-translationally, contains 4-hydroxyproline. Prolines at the third position of the tripeptide repeating unit (G-X-Y) are hydroxylated in some or all of the chains. Contains 3-hydroxyproline. This modification occurs on the first proline residue in the sequence motif Gly-Pro-Hyp, where Hyp is 4-hydroxyproline. In terms of processing, type IV collagens contain numerous cysteine residues which are involved in inter- and intramolecular disulfide bonding. 12 of these, located in the NC1 domain, are conserved in all known type IV collagens. Post-translationally, the trimeric structure of the NC1 domains is stabilized by covalent bonds (sulfilimine cross-links) between Lys and Met residues. These cross-links are important for the mechanical stability of the basement membrane. Sulfilimine cross-link is catalyzed by PXDN. Proteolytic processing produces the C-terminal NC1 peptide, arresten. In terms of tissue distribution, highly expressed in placenta.

It is found in the secreted. The protein localises to the extracellular space. It localises to the extracellular matrix. The protein resides in the basement membrane. Its function is as follows. Type IV collagen is the major structural component of glomerular basement membranes (GBM), forming a 'chicken-wire' meshwork together with laminins, proteoglycans and entactin/nidogen. In terms of biological role, arresten, comprising the C-terminal NC1 domain, inhibits angiogenesis and tumor formation. The C-terminal half is found to possess the anti-angiogenic activity. Specifically inhibits endothelial cell proliferation, migration and tube formation. The sequence is that of Collagen alpha-1(IV) chain from Homo sapiens (Human).